The sequence spans 467 residues: Cytochrome c-552 (467 aa).

Positions M1 to A27 are cleaved as a signal peptide. Position 87 (H87) interacts with heme c. Heme-binding residues include C115, C118, and K119. 6 residues coordinate heme c: C153, C156, H157, C195, C198, and H199. The Ca(2+) site is built by E201, Y202, K250, and Q252. A substrate-binding site is contributed by Y202. A substrate-binding site is contributed by H253. Residues H264, C271, C274, H275, H290, C303, C306, H307, and H382 each contribute to the heme c site.

This sequence belongs to the cytochrome c-552 family. Ca(2+) is required as a cofactor. It depends on heme c as a cofactor.

It localises to the periplasm. It carries out the reaction 6 Fe(III)-[cytochrome c] + NH4(+) + 2 H2O = 6 Fe(II)-[cytochrome c] + nitrite + 8 H(+). Its pathway is nitrogen metabolism; nitrate reduction (assimilation). Functionally, catalyzes the reduction of nitrite to ammonia, consuming six electrons in the process. The polypeptide is Cytochrome c-552 (Shewanella sp. (strain W3-18-1)).